The chain runs to 177 residues: Large ribosomal subunit protein uL6 (177 aa).

It belongs to the universal ribosomal protein uL6 family. Part of the 50S ribosomal subunit.

This protein binds to the 23S rRNA, and is important in its secondary structure. It is located near the subunit interface in the base of the L7/L12 stalk, and near the tRNA binding site of the peptidyltransferase center. In Rhizobium etli (strain CIAT 652), this protein is Large ribosomal subunit protein uL6.